Here is a 623-residue protein sequence, read N- to C-terminus: (-)-limonene synthase TPS1, chloroplastic (623 aa).

The transit peptide at 1 to 60 directs the protein to the chloroplast; sequence MQCIAFHQFASSSSLPIWSSIDNRFTPKTSITSISKPKPKLKSKSNLKSRSRSSTCYPIQ. The segment at 29–52 is disordered; that stretch reads TSITSISKPKPKLKSKSNLKSRSR. Over residues 37-51 the composition is skewed to basic residues; the sequence is PKPKLKSKSNLKSRS. Residues R337, D374, D378, R516, and D519 each contribute to the (2E)-geranyl diphosphate site. Residues D374 and D378 each contribute to the Mg(2+) site. The DDXXD motif motif lies at 374-378; it reads DDMHD. 3 residues coordinate Mg(2+): D519, T523, and E527.

Belongs to the terpene synthase family. Tpsb subfamily. It depends on Mg(2+) as a cofactor. Mn(2+) serves as cofactor. The cofactor is K(+). Trichome.

Its subcellular location is the plastid. The protein resides in the chloroplast. The catalysed reaction is (2E)-geranyl diphosphate = (4S)-limonene + diphosphate. It catalyses the reaction (2E)-geranyl diphosphate = terpinolene + diphosphate. The enzyme catalyses (2E)-geranyl diphosphate = (1R,5R)-alpha-pinene + diphosphate. It carries out the reaction (2E)-geranyl diphosphate = (1R,5R)-beta-pinene + diphosphate. The catalysed reaction is (2E)-geranyl diphosphate = beta-myrcene + diphosphate. It catalyses the reaction (2E)-geranyl diphosphate = (4R)-limonene + diphosphate. It functions in the pathway secondary metabolite biosynthesis; terpenoid biosynthesis. Its pathway is terpene metabolism; (4S)-limonene biosynthesis; (4S)-limonene from geranyl diphosphate: step 1/1. Its function is as follows. Involved in monoterpene (C10) olefins biosynthesis, constituants of cannabinoids and terpenoids-rich resins. Catalyzes mainly the conversion of (2E)-geranyl diphosphate to (-)-limonene, and also produces minor products such as (+)-limonene, (+)-alpha-pinene, terpinolene, (+)-beta-pinene and beta-myrcene. This is (-)-limonene synthase TPS1, chloroplastic from Cannabis sativa (Hemp).